Here is a 199-residue protein sequence, read N- to C-terminus: Large ribosomal subunit protein uL4 (199 aa).

It belongs to the universal ribosomal protein uL4 family. In terms of assembly, part of the 50S ribosomal subunit.

Functionally, one of the primary rRNA binding proteins, this protein initially binds near the 5'-end of the 23S rRNA. It is important during the early stages of 50S assembly. It makes multiple contacts with different domains of the 23S rRNA in the assembled 50S subunit and ribosome. Forms part of the polypeptide exit tunnel. This Aquifex pyrophilus protein is Large ribosomal subunit protein uL4.